A 160-amino-acid chain; its full sequence is SsrA-binding protein (160 aa).

Belongs to the SmpB family.

It localises to the cytoplasm. Its function is as follows. Required for rescue of stalled ribosomes mediated by trans-translation. Binds to transfer-messenger RNA (tmRNA), required for stable association of tmRNA with ribosomes. tmRNA and SmpB together mimic tRNA shape, replacing the anticodon stem-loop with SmpB. tmRNA is encoded by the ssrA gene; the 2 termini fold to resemble tRNA(Ala) and it encodes a 'tag peptide', a short internal open reading frame. During trans-translation Ala-aminoacylated tmRNA acts like a tRNA, entering the A-site of stalled ribosomes, displacing the stalled mRNA. The ribosome then switches to translate the ORF on the tmRNA; the nascent peptide is terminated with the 'tag peptide' encoded by the tmRNA and targeted for degradation. The ribosome is freed to recommence translation, which seems to be the essential function of trans-translation. This Mannheimia succiniciproducens (strain KCTC 0769BP / MBEL55E) protein is SsrA-binding protein.